The sequence spans 485 residues: Tektin-5 (485 aa).

4 coiled-coil regions span residues Ser113–Cys185, Gln225–Arg251, Phe342–Glu385, and Asp423–Leu443.

The protein belongs to the tektin family. In terms of assembly, microtubule inner protein component of sperm flagellar doublet microtubules. Interacts with TEKT3. In terms of processing, ubiquitinated, leading to its degradation. Deubiquitinated by USP16, promoting its stability.

Its subcellular location is the cytoplasm. It is found in the cytoskeleton. It localises to the flagellum axoneme. Its function is as follows. Sperm-specific microtubule inner protein (MIP) part of the dynein-decorated doublet microtubules (DMTs) in flagellar axoneme. Forms an extensive interaction network in different conformations that reinforces the helix bundle composed by other tektin proteins (TEKT1 to TEKT4) and MIPs to anchor the tektin bundle onto the tubulin wall of A-tubule of the sperm flagellum. The chain is Tektin-5 (TEKT5) from Macaca fascicularis (Crab-eating macaque).